The sequence spans 173 residues: MNRQSSEKLKKTCAWFIHLIASMCGTGLLGLFVTNVTLYRQIKICGNREGMSGWVQINNNCYTMVENITFDELIGHCTKHDSIIPNALDQSEVLIVSSVLGVKDHWMPFTKKSRNWFHGKLPVNIKGDGDKREELGKPRKPDKSEKCTIYYDNGIIEENCNKKHTGICFSPFF.

In terms of domain architecture, C-type lectin spans 50-169 (GMSGWVQINN…CNKKHTGICF (120 aa)).

The polypeptide is Putative C-type lectin protein FPV198 (Vertebrata (FPV)).